The sequence spans 106 residues: UPF0145 protein BF0270 (106 aa).

Belongs to the UPF0145 family.

The sequence is that of UPF0145 protein BF0270 from Bacteroides fragilis (strain YCH46).